Here is a 431-residue protein sequence, read N- to C-terminus: MPNPRPGKPSAPSLALGPSPGASPSWRAAPKASDLLGARGPGGIFQGRDLRGGAHASSSSLNPMPPSQLQLPTLPLVMVAPSGARLGPLPHLQALLQDRPHFMHQLSTVDAHARTPVLQVHPLESPAMISLPPPTTATGVFSLKARPGLPPGINVASLEWVSREPALLCTFPNPGAPRKDSTLSAMPQSSYPLLANGVCKWPGCEKVFEEPEDFLKHCQADHLLDEKGRAQCLLQREMVQSLEQQLVLEKEKLSAMQAHLAGKMALTKASSVASSDKGSCCIVAAGSQGSAVPAWSGPREAPDSLFAVRRHLWGSHGNSTFPEFLHNMDYFKFHNMRPPFTYATLIRWAILEAPEKQRTLNEIYHWFTRMFAFFRNHPATWKNAIRHNLSLHKCFVRVESEKGAVWTVDELEFRKKRSQRPSRCSNPTPGP.

Residues 1–68 (MPNPRPGKPS…SSLNPMPPSQ (68 aa)) form a disordered region. Residues 10–25 (SAPSLALGPSPGASPS) show a composition bias toward low complexity. Residue S19 is modified to Phosphoserine; by CDK2. K31 carries the N6-acetyllysine modification. The short motif at 68 to 76 (QLQLPTLPL) is the Nuclear export signal element. The LXXLL motif motif lies at 92 to 96 (LQALL). Positions 106 to 190 (LSTVDAHART…STLSAMPQSS (85 aa)) are essential for transcriptional repressor activity and for interaction with KAT5 and HDAC7. The tract at residues 149-199 (LPPGINVASLEWVSREPALLCTFPNPGAPRKDSTLSAMPQSSYPLLANGVC) is interaction with IKZF4. The C2H2-type zinc finger occupies 197–222 (GVCKWPGCEKVFEEPEDFLKHCQADH). The short motif at 239–248 (VQSLEQQLVL) is the Nuclear export signal element. A leucine-zipper region spans residues 239 to 260 (VQSLEQQLVLEKEKLSAMQAHL). Glycyl lysine isopeptide (Lys-Gly) (interchain with G-Cter in ubiquitin) cross-links involve residues K250 and K252. 2 positions are modified to N6-acetyllysine; alternate: K263 and K268. Residues K263 and K268 each participate in a glycyl lysine isopeptide (Lys-Gly) (interchain with G-Cter in ubiquitin); alternate cross-link. Residues 278–336 (GSCCIVAAGSQGSAVPAWSGPREAPDSLFAVRRHLWGSHGNSTFPEFLHNMDYFKFHNM) are interaction with RUNX1. Residues 337-423 (RPPFTYATLI…RKKRSQRPSR (87 aa)) constitute a DNA-binding region (fork-head). K393 participates in a covalent cross-link: Glycyl lysine isopeptide (Lys-Gly) (interchain with G-Cter in ubiquitin). The Nuclear localization signal motif lies at 414-417 (RKKR). Residue S418 is modified to Phosphoserine. Positions 418-431 (SQRPSRCSNPTPGP) are excised as a propeptide.

Homodimer. Dimerization is essential for its transcriptional regulator activity. Interacts with IKZF3. Interacts (via LXXLL motif) with RORA (via AF-2 motif). Interacts with HDAC9 in the absence of T-cell stimulation. Interacts with PPP1CA, PPP1CB, PPP1CG, KAT5, HDAC7, HSPA8, USP7, STUB1, HSPA1A/B, RUNX1, RUNX2, RUNX3, RELA, NFATC2, IKFZ4 and RORC. Phosphorylation at Ser-418 regulates its transcriptional repressor activity and consequently, regulatory T-cells (Treg) suppressive function. Phosphorylation by CDK2 negatively regulates its transcriptional activity and protein stability. Post-translationally, polyubiquitinated, leading to its proteasomal degradation in regulatory T-cells (Treg) which is mediated by STUB1 in a HSPA1A/B-dependent manner. Deubiquitinated by USP7 and USP44 leading to increase in protein stability. In terms of processing, acetylation on lysine residues stabilizes FOXP3 and promotes differentiation of T-cells into induced regulatory T-cells (iTregs) associated with suppressive functions. Acetylation is mediated by a coordinated action of KAT5 and EP300/p300 acetyltransferases: EP300/p300 is required to enhance KAT5 autoacetylation, promoting acetylation of FOXP3 by KAT5. Deacetylated by SIRT1. Undergoes proteolytic cleavage in activated regulatory T-cells (Treg), and can be cleaved at either the N- or C-terminal site, or at both sites.

The protein resides in the nucleus. The protein localises to the cytoplasm. Transcriptional regulator which is crucial for the development and inhibitory function of regulatory T-cells (Treg). Plays an essential role in maintaining homeostasis of the immune system by allowing the acquisition of full suppressive function and stability of the Treg lineage, and by directly modulating the expansion and function of conventional T-cells. Can act either as a transcriptional repressor or a transcriptional activator depending on its interactions with other transcription factors, histone acetylases and deacetylases. The suppressive activity of Treg involves the coordinate activation of many genes, including CTLA4 and TNFRSF18 by FOXP3 along with repression of genes encoding cytokines such as interleukin-2 (IL2) and interferon-gamma (IFNG). Inhibits cytokine production and T-cell effector function by repressing the activity of two key transcription factors, RELA and NFATC2. Mediates transcriptional repression of IL2 via its association with histone acetylase KAT5 and histone deacetylase HDAC7. Can activate the expression of TNFRSF18, IL2RA and CTLA4 and repress the expression of IL2 and IFNG via its association with transcription factor RUNX1. Inhibits the differentiation of IL17 producing helper T-cells (Th17) by antagonizing RORC function, leading to down-regulation of IL17 expression, favoring Treg development. Inhibits the transcriptional activator activity of RORA. Can repress the expression of IL2 and IFNG via its association with transcription factor IKZF4. The protein is Forkhead box protein P3 (FOXP3) of Macaca fascicularis (Crab-eating macaque).